The following is a 489-amino-acid chain: Corticosteroid-binding protein (489 aa).

This sequence to yeast FMS1.

Functionally, may be a flavoprotein with enzymatic activity. This chain is Corticosteroid-binding protein (CBP1), found in Candida albicans (strain SC5314 / ATCC MYA-2876) (Yeast).